A 451-amino-acid chain; its full sequence is Lysine histidine transporter-like 3 (451 aa).

Over 1–40 (MKGIPSSSNQILNQDLVEDQSFELEDWLPITASRNANWYY) the chain is Cytoplasmic. The helical transmembrane segment at 41 to 61 (SAFHNVTAIVGAGVLGLPYAM) threads the bilayer. At 62–63 (SE) the chain is on the extracellular side. Residues 64-84 (LGWGPGVVVLILSWVITLYTF) traverse the membrane as a helical segment. Residues 85-115 (WQMIEMHEMFEGKRFDRYHELGQAAFGKKLG) are Cytoplasmic-facing. A helical membrane pass occupies residues 116–136 (LYIVVPLQLLVETSACIVYMV). The Extracellular segment spans residues 137–159 (TGGESLKKIHQLSVGDYECRKLK). Residues 160-177 (VRHFILIFASSQFVLSLL) traverse the membrane as a helical segment. Topologically, residues 178 to 182 (KNFNS) are cytoplasmic. A helical membrane pass occupies residues 183–203 (ISGVSLVAAVMSMSYSTIAWV). The Extracellular segment spans residues 204-227 (ASLTKGVANNVEYGYKRRNNTSVP). Residues 228 to 248 (LAFLGALGEMAFAYAGHNVVL) traverse the membrane as a helical segment. At 249–269 (EIQATIPSTPENPSKRPMWKG) the chain is on the cytoplasmic side. A helical membrane pass occupies residues 270-290 (AIVAYIIVAFCYFPVALVGFW). Over 291 to 309 (TFGNNVEENILKTLRGPKG) the chain is Extracellular. The chain crosses the membrane as a helical span at residues 310 to 330 (LIIVANIFVIIHLMGSYQVYA). At 331–358 (MPVFDMIESVMIKKWHFSPTRVLRFTIR) the chain is on the cytoplasmic side. The helical transmembrane segment at 359-379 (WTFVAATMGIAVALPHFSALL) threads the bilayer. A topological domain (extracellular) is located at residue S380. Residues 381 to 401 (FFGGFIFAPTTYFIPCIIWLI) form a helical membrane-spanning segment. Over 402–413 (LKKPKRFSLSWC) the chain is Cytoplasmic. A helical membrane pass occupies residues 414 to 434 (INWICIILGVLVMIIAPIGGL). Residues 435-451 (AKLMNALKQPDSSCKST) lie on the Extracellular side of the membrane.

The protein belongs to the amino acid/polyamine transporter 2 family. Amino acid/auxin permease (AAAP) (TC 2.A.18.2) subfamily.

It localises to the cell membrane. Amino acid transporter. In Arabidopsis thaliana (Mouse-ear cress), this protein is Lysine histidine transporter-like 3.